The chain runs to 106 residues: Small ribosomal subunit protein uS10 (106 aa).

It belongs to the universal ribosomal protein uS10 family. In terms of assembly, part of the 30S ribosomal subunit.

Functionally, involved in the binding of tRNA to the ribosomes. This Synechococcus sp. (strain CC9605) protein is Small ribosomal subunit protein uS10.